Consider the following 260-residue polypeptide: Mediator of RNA polymerase II transcription subunit 8 (260 aa).

This sequence belongs to the Mediator complex subunit 8 family. As to quaternary structure, component of the Mediator complex.

It is found in the nucleus. In terms of biological role, component of the Mediator complex, a coactivator involved in the regulated transcription of nearly all RNA polymerase II-dependent genes. Mediator functions as a bridge to convey information from gene-specific regulatory proteins to the basal RNA polymerase II transcription machinery. Mediator is recruited to promoters by direct interactions with regulatory proteins and serves as a scaffold for the assembly of a functional preinitiation complex with RNA polymerase II and the general transcription factors. This Emericella nidulans (strain FGSC A4 / ATCC 38163 / CBS 112.46 / NRRL 194 / M139) (Aspergillus nidulans) protein is Mediator of RNA polymerase II transcription subunit 8 (med8).